A 595-amino-acid polypeptide reads, in one-letter code: MHRYRSHTCAALRKSDVGETVRLSGWVHRVRDHGGVLFIDLRDHYGITQVVADPDSPAFKVAETVRGEWVIRIDGLVKARSEDTINKGMATGEIELYAQEIEVLGVAKELPLPVFGEPEYPEDVRLKYRFLDLRRETLHRNIVKRTQIISSMRKGMGDLGFAEYTTPILTASSPEGARDFLVPSRIHEGQFFALPQAPQQYKQLLMVAGFDRYFQIAPCFRDEDPRADRLPGEFYQLDVEMSFVTQEDVWTTMEPMMTAVFEQFAEGKPVTKQWPRIPYDESIRKYGSDKPDLRNPIVMEAVTEHFDGSGFKVFANMIASNPKVQVWAIPAKTGGSRAFCDRMNAWAQSQGQPGLGYIFWKEEEGKVAGSGPLAKNIGEERTEALRQQLGLEAGDACFFVAGDPAKFYKFAGEARTRAADELNLIDRDRFEMCWIVDFPFFEYNEEEKKIDFAHNPFSMPQGGMEALEGQDPLSIKAFQYDAVCNGFEIASGSIRNQSPELMVKAFEKVGLSQSDVEERFGGLYRAFQYGAPPHGGCAFGIDRVVMLLVGAKNLREITLFPMNQQAQDLLMNAPSPATPTQLRELALRVVPSKKD.

Glu-175 contributes to the L-aspartate binding site. Positions 199 to 202 (QQYK) are aspartate. L-aspartate contacts are provided by Arg-221 and His-454. 221–223 (RDE) serves as a coordination point for ATP. An ATP-binding site is contributed by Glu-488. Residue Arg-495 participates in L-aspartate binding. 540 to 543 (GIDR) is an ATP binding site.

It belongs to the class-II aminoacyl-tRNA synthetase family. Type 1 subfamily. As to quaternary structure, homodimer.

It localises to the cytoplasm. It catalyses the reaction tRNA(Asx) + L-aspartate + ATP = L-aspartyl-tRNA(Asx) + AMP + diphosphate. In terms of biological role, aspartyl-tRNA synthetase with relaxed tRNA specificity since it is able to aspartylate not only its cognate tRNA(Asp) but also tRNA(Asn). Reaction proceeds in two steps: L-aspartate is first activated by ATP to form Asp-AMP and then transferred to the acceptor end of tRNA(Asp/Asn). This chain is Aspartate--tRNA(Asp/Asn) ligase, found in Agrobacterium fabrum (strain C58 / ATCC 33970) (Agrobacterium tumefaciens (strain C58)).